A 122-amino-acid chain; its full sequence is Large ribosomal subunit protein uL14 (122 aa).

Belongs to the universal ribosomal protein uL14 family. In terms of assembly, part of the 50S ribosomal subunit. Forms a cluster with proteins L3 and L19. In the 70S ribosome, L14 and L19 interact and together make contacts with the 16S rRNA in bridges B5 and B8.

Functionally, binds to 23S rRNA. Forms part of two intersubunit bridges in the 70S ribosome. The protein is Large ribosomal subunit protein uL14 of Cutibacterium acnes (strain DSM 16379 / KPA171202) (Propionibacterium acnes).